A 1562-amino-acid chain; its full sequence is E3 ubiquitin-protein ligase listerin (1562 aa).

HEAT repeat units lie at residues 41 to 78 (SLYS…DFNQ), 127 to 164 (KFLK…KDPA), 175 to 217 (EQLL…SAVL), 262 to 301 (ETVL…ITSK), 304 to 348 (LKVC…VSRT), 495 to 532 (SAIS…FLDS), 555 to 592 (STYQ…VALS), 813 to 850 (IRYA…DYNC), 908 to 945 (YYSR…KTVR), 997 to 1037 (FKSL…WLDS), 1047 to 1085 (TVRL…DSLS), 1188 to 1226 (INQS…SDVD), 1263 to 1298 (NSFI…KEAG), and 1299 to 1339 (LINR…NFSP). The segment at 1508–1555 (CAICYSILHAVDRKLPSKTCPTCKNKFHGACLYKWFRSSGNNTCPLCR) adopts an RING-type zinc-finger fold.

The protein belongs to the LTN1 family. Component of the ribosome quality control complex (RQC), composed of the E3 ubiquitin ligase RKR1/LTN1, RQC1 and RQC2, as well as CDC48 and its ubiquitin-binding cofactors associated with the 60S ribosomal subunits.

It localises to the nucleus. It is found in the cytoplasm. The protein resides in the cytosol. The enzyme catalyses S-ubiquitinyl-[E2 ubiquitin-conjugating enzyme]-L-cysteine + [acceptor protein]-L-lysine = [E2 ubiquitin-conjugating enzyme]-L-cysteine + N(6)-ubiquitinyl-[acceptor protein]-L-lysine.. It functions in the pathway protein modification; protein ubiquitination. Its function is as follows. E3 ubiquitin-protein ligase component of the ribosome quality control complex (RQC), a ribosome-associated complex that mediates ubiquitination and extraction of incompletely synthesized nascent chains for proteasomal degradation. Mediates ubiquitination of proteins derived from mRNAs lacking stop codons (non-stop proteins) and other translation arrest products induced by poly-lysine sequences and tandem rare codons. Ubiquitination leads to CDC48 recruitment for extraction and degradation of the incomplete translation product. May indirectly play a role in chromatin function and transcription. The polypeptide is E3 ubiquitin-protein ligase listerin (Saccharomyces cerevisiae (strain ATCC 204508 / S288c) (Baker's yeast)).